The following is a 26-amino-acid chain: Conotoxin Eb6.15 (26 aa).

Intrachain disulfides connect C7/C18 and C13/C25.

It belongs to the conotoxin O1 superfamily. In terms of tissue distribution, expressed by the venom duct.

Its subcellular location is the secreted. This Conus ebraeus (Hebrew cone) protein is Conotoxin Eb6.15 (E1).